Consider the following 645-residue polypeptide: Dictomallein-like protein (645 aa).

The first 13 residues, 1–13 (MKLSMVMVLLVLA), serve as a signal peptide directing secretion. The disordered stretch occupies residues 19–55 (CGGNDDNNSERTHESGDSNGDVTTPDNDASSNDEDDA). In terms of domain architecture, Peptidase M66 spans 177 to 448 (PALHPELDLT…QRWVRNRARM (272 aa)). A Zn(2+)-binding site is contributed by histidine 333. Residue glutamate 334 is part of the active site. Zn(2+)-binding residues include histidine 337 and histidine 343.

This sequence belongs to the dictomallein family. Zn(2+) serves as cofactor.

It localises to the secreted. This is Dictomallein-like protein (dtmL) from Hahella chejuensis (strain KCTC 2396).